The following is a 403-amino-acid chain: Keratin, type I cytoskeletal 19 (403 aa).

The interval 1 to 82 is head; it reads MTSYSYRQSS…TVTDGLLGGN (82 aa). The residue at position 7 (arginine 7) is an Omega-N-methylarginine. Serine 14 is modified (phosphoserine). Arginine 24 bears the Asymmetric dimethylarginine; alternate mark. An Omega-N-methylarginine; alternate modification is found at arginine 24. The residue at position 27 (serine 27) is a Phosphoserine. Arginine 32 bears the Omega-N-methylarginine mark. Serine 35 and serine 40 each carry phosphoserine. Arginine 43 and arginine 51 each carry omega-N-methylarginine. A phosphoserine mark is found at serine 57 and serine 67. The tract at residues 83 to 118 is coil 1A; sequence EKITMQNLNDRLASYLDKVRALEQANGELEVKIRDW. Residues 83–394 form the IF rod domain; sequence EKITMQNLND…SLLEGQEAHY (312 aa). Residues 119-136 form a linker 1 region; it reads YQKQGPGPFRDYSQYFKT. The segment at 137 to 228 is coil 1B; that stretch reads IEDLRDKILG…KNHEEEISAL (92 aa). Residues 229–251 are linker 12; sequence RSQVGGQVSVEVDSTPGIDLAKI. Residues 247 to 393 form a necessary for interaction with PNN region; the sequence is DLAKILSEMR…RSLLEGQEAH (147 aa). Residues 252-390 form a coil 2 region; the sequence is LSEMRSQYEA…ATYRSLLEGQ (139 aa). Position 326 is a phosphothreonine (threonine 326). The tract at residues 391–403 is rod-like helical tail; it reads EAHYNSLSIAKAL. Phosphotyrosine is present on tyrosine 394. Serine 398 bears the Phosphoserine mark.

The protein belongs to the intermediate filament family. In terms of assembly, heterotetramer of two type I and two type II keratins. Interacts with PNN. Interacts with the actin-binding domain of DMD. As to expression, expressed in brain, heart, skin and in costameres of myoplasm at the sarcolemmal membrane in skeletal and cardiac muscle fibers. Undifferentiated gonads and somatic cells of ovarian cords throughout the fetal ovary development.

Its function is as follows. Involved in the organization of myofibers. Together with KRT8, helps to link the contractile apparatus to dystrophin at the costameres of striated muscle. The protein is Keratin, type I cytoskeletal 19 (Krt19) of Rattus norvegicus (Rat).